A 542-amino-acid chain; its full sequence is 4-coumarate--CoA ligase 2 (542 aa).

The ATP site is built by Ser189, Ser190, Gly191, Thr192, Thr193, and Lys197. The (E)-4-coumaroyl-AMP site is built by Tyr239 and Ser243. The (E)-caffeoyl-AMP site is built by Tyr239 and Ser243. Tyr239 and Ser243 together coordinate (E)-feruloyl-AMP. Position 260 (Lys260) interacts with CoA. Positions 262–331 (DIVSFLELIQ…AKFPNAKLGQ (70 aa)) are SBD1. Ala309 serves as a coordination point for (E)-4-coumaroyl-AMP. Position 309 (Ala309) interacts with (E)-caffeoyl-AMP. Position 309 (Ala309) interacts with (E)-feruloyl-AMP. The ATP site is built by Gln331, Gly332, and Thr336. 7 residues coordinate (E)-4-coumaroyl-AMP: Gly332, Thr336, Met344, Asp420, Arg435, Lys437, and Lys441. Residues Gly332, Thr336, Met344, Asp420, Arg435, Lys437, and Lys441 each coordinate (E)-caffeoyl-AMP. Positions 332, 336, 344, 420, 435, 437, and 441 each coordinate (E)-feruloyl-AMP. 2 residues coordinate AMP: Gly332 and Thr336. Positions 332–399 (GYGMTEAGPV…IRGDQIMKGY (68 aa)) are SBD2. Asp420 and Arg435 together coordinate ATP. Asp420 serves as a coordination point for AMP. Residues Lys437 and Lys441 each contribute to the AMP site. CoA contacts are provided by Lys443 and Gly444. Gln446 contacts AMP. An ATP-binding site is contributed by Lys526.

It belongs to the ATP-dependent AMP-binding enzyme family. It depends on Mg(2+) as a cofactor. As to expression, mainly expressed in old stems and, to a lower extent, in flowers (e.g. in ovary), leaves, young stems, shoot tips and patel limbs.

It carries out the reaction (E)-4-coumarate + ATP + CoA = (E)-4-coumaroyl-CoA + AMP + diphosphate. It catalyses the reaction (E)-caffeate + ATP + CoA = (E)-caffeoyl-CoA + AMP + diphosphate. The catalysed reaction is (E)-ferulate + ATP + CoA = (E)-feruloyl-CoA + AMP + diphosphate. The enzyme catalyses (E)-cinnamate + ATP + CoA = (E)-cinnamoyl-CoA + AMP + diphosphate. It carries out the reaction (E)-4-coumarate + ATP + H(+) = (E)-4-coumaroyl-AMP + diphosphate. It catalyses the reaction (E)-4-coumaroyl-AMP + CoA = (E)-4-coumaroyl-CoA + AMP + H(+). The catalysed reaction is (E)-caffeate + ATP + H(+) = (E)-caffeoyl-AMP + diphosphate. The enzyme catalyses (E)-caffeoyl-AMP + CoA = (E)-caffeoyl-CoA + AMP + H(+). It carries out the reaction (E)-ferulate + ATP + H(+) = (E)-feruloyl-AMP + diphosphate. It catalyses the reaction (E)-feruloyl-AMP + CoA = (E)-feruloyl-CoA + AMP + H(+). The protein operates within phytoalexin biosynthesis; 3,4',5-trihydroxystilbene biosynthesis; 3,4',5-trihydroxystilbene from trans-4-coumarate: step 1/2. Functionally, major enzyme of the phenylpropanoid pathway that mediates the production of several precursors for numerous metabolites and regulates carbon flow. Catalyzes the formation of CoA thioesters using 4-coumarate, ferulate, caffeate, and cinnamate as substrates. Follows a two-step reaction mechanism, wherein a (hydroxy)cinnamate substrate first undergoes adenylation by ATP leading to an acyl-AMP, followed by a thioesterification in the presence of CoA to yield the final (hydroxy)cinnamoyl-CoA product. Almost inactive toward sinapate. The sequence is that of 4-coumarate--CoA ligase 2 from Nicotiana tabacum (Common tobacco).